The sequence spans 385 residues: Torsin-3A (385 aa).

Positions 1–21 are cleaved as a signal peptide; that stretch reads MFLGALWLLLLLPLRPPGAQG. N-linked (GlcNAc...) asparagine glycosylation occurs at Asn110. ATP is bound at residue 155–162; that stretch reads GWSGTGKN.

The protein belongs to the ClpA/ClpB family. Torsin subfamily. Interacts with TOR1AIP1. In terms of processing, N-glycosylated.

Its subcellular location is the cytoplasm. It is found in the endoplasmic reticulum lumen. This Mus musculus (Mouse) protein is Torsin-3A (Tor3a).